A 202-amino-acid polypeptide reads, in one-letter code: Small ribosomal subunit protein uS4 (202 aa).

Residues 1–13 (MSRYRGPRLRVTR) show a composition bias toward basic residues. Residues 1–42 (MSRYRGPRLRVTRRLGELPGLTRKASKKSNPPGQHGQARRKR) are disordered. Residues 90-152 (NRLDNVCFRL…KASKKLVEGN (63 aa)) enclose the S4 RNA-binding domain.

The protein belongs to the universal ribosomal protein uS4 family. As to quaternary structure, part of the 30S ribosomal subunit. Contacts protein S5. The interaction surface between S4 and S5 is involved in control of translational fidelity.

Functionally, one of the primary rRNA binding proteins, it binds directly to 16S rRNA where it nucleates assembly of the body of the 30S subunit. In terms of biological role, with S5 and S12 plays an important role in translational accuracy. This chain is Small ribosomal subunit protein uS4, found in Prochlorococcus marinus (strain MIT 9312).